Here is a 293-residue protein sequence, read N- to C-terminus: Ribosomal protein L11 methyltransferase (293 aa).

Residues Thr-145, Gly-166, Asp-188, and Asn-230 each coordinate S-adenosyl-L-methionine.

The protein belongs to the methyltransferase superfamily. PrmA family.

It is found in the cytoplasm. The catalysed reaction is L-lysyl-[protein] + 3 S-adenosyl-L-methionine = N(6),N(6),N(6)-trimethyl-L-lysyl-[protein] + 3 S-adenosyl-L-homocysteine + 3 H(+). Its function is as follows. Methylates ribosomal protein L11. The sequence is that of Ribosomal protein L11 methyltransferase from Salmonella dublin (strain CT_02021853).